We begin with the raw amino-acid sequence, 360 residues long: Photosystem II protein D1 3 (360 aa).

3 helical membrane passes run 29–46, 118–133, and 142–156; these read YVGW…TATI, HFLL…EWEL, and WIAV…AATA. Position 118 (His118) interacts with chlorophyll a. Tyr126 lines the pheophytin a pocket. Residues Asp170 and Glu189 each contribute to the [CaMn4O5] cluster site. A helical transmembrane segment spans residues 197–218; that stretch reads FHMLGVAGVFGGALFSAMHGSL. His198 serves as a coordination point for chlorophyll a. Residues His215 and 264 to 265 contribute to the a quinone site; that span reads SF. Fe cation is bound at residue His215. Residue His272 participates in Fe cation binding. The helical transmembrane segment at 274–288 threads the bilayer; sequence FLAAWPVIGIWFASL. The [CaMn4O5] cluster site is built by His332, Glu333, Asp342, and Ala344. A propeptide spanning residues 345-360 is cleaved from the precursor; sequence AGDQAPVALQAPAING.

Belongs to the reaction center PufL/M/PsbA/D family. In terms of assembly, PSII is composed of 1 copy each of membrane proteins PsbA, PsbB, PsbC, PsbD, PsbE, PsbF, PsbH, PsbI, PsbJ, PsbK, PsbL, PsbM, PsbT, PsbX, PsbY, PsbZ, Psb30/Ycf12, peripheral proteins PsbO, CyanoQ (PsbQ), PsbU, PsbV and a large number of cofactors. It forms dimeric complexes. It depends on The D1/D2 heterodimer binds P680, chlorophylls that are the primary electron donor of PSII, and subsequent electron acceptors. It shares a non-heme iron and each subunit binds pheophytin, quinone, additional chlorophylls, carotenoids and lipids. D1 provides most of the ligands for the Mn4-Ca-O5 cluster of the oxygen-evolving complex (OEC). There is also a Cl(-1) ion associated with D1 and D2, which is required for oxygen evolution. The PSII complex binds additional chlorophylls, carotenoids and specific lipids. as a cofactor. In terms of processing, tyr-161 forms a radical intermediate that is referred to as redox-active TyrZ, YZ or Y-Z. Post-translationally, C-terminally processed by CtpA; processing is essential to allow assembly of the oxygen-evolving complex and thus photosynthetic growth.

The protein localises to the cellular thylakoid membrane. The catalysed reaction is 2 a plastoquinone + 4 hnu + 2 H2O = 2 a plastoquinol + O2. Photosystem II (PSII) is a light-driven water:plastoquinone oxidoreductase that uses light energy to abstract electrons from H(2)O, generating O(2) and a proton gradient subsequently used for ATP formation. It consists of a core antenna complex that captures photons, and an electron transfer chain that converts photonic excitation into a charge separation. The D1/D2 (PsbA/PsbD) reaction center heterodimer binds P680, the primary electron donor of PSII as well as several subsequent electron acceptors. The protein is Photosystem II protein D1 3 of Picosynechococcus sp. (strain ATCC 27264 / PCC 7002 / PR-6) (Agmenellum quadruplicatum).